A 144-amino-acid chain; its full sequence is 3-hydroxyacyl-[acyl-carrier-protein] dehydratase FabZ (144 aa).

Residue histidine 51 is part of the active site.

The protein belongs to the thioester dehydratase family. FabZ subfamily.

The protein resides in the cytoplasm. The catalysed reaction is a (3R)-hydroxyacyl-[ACP] = a (2E)-enoyl-[ACP] + H2O. Its function is as follows. Involved in unsaturated fatty acids biosynthesis. Catalyzes the dehydration of short chain beta-hydroxyacyl-ACPs and long chain saturated and unsaturated beta-hydroxyacyl-ACPs. This is 3-hydroxyacyl-[acyl-carrier-protein] dehydratase FabZ from Clostridium botulinum (strain Langeland / NCTC 10281 / Type F).